The following is a 494-amino-acid chain: MTTVRTRIAPSPTGDPHVGTAYIALFNLCFARQHGGQFILRIEDTDQLRSTRESEQQIFDALRWLGIEWDEGPDVGGPHGPYRQSERGHIYKKYSDELVEQGHAFTCFCTPERLDAVRAEQMARKETPRYDGHCMHLPKDEVQRRVAAGESHVTRMKVPTEGVCVVPDMLRGNVEIPWDRMDMQVLMKADGLPTYFLANVVDDHLMGITHVLRGEEWLPSAPKLIKLYEYFGWEQPQLCYMPLLRNPDKSKLSKRKNPTSITFYERMGYLPQALLNYLGRMGWSMPDEREKFTLAEMIEHFDLSRVSLGGPIFDLEKLSWLNGQWIREQSVEEFAREVQKWALNPEYLMKIAPHVQGRVENFSQIAPLAGFFFSGGVPLDASLFEHKKLDPTQVRQVLQLVLWKLESLRQWEKERITGCIQAVAEHLQLKLRDVMPLMFPAITGHASSVSVLDAMEILGADLSRYRLRQALELLGGASKKETKEWEKIRDAIPG.

Positions Pro10–Thr20 match the 'HIGH' region motif. Cys107, Cys109, Cys134, and His136 together coordinate Zn(2+). A 'KMSKS' region motif is present at residues Lys251 to Arg255. Lys254 is a binding site for ATP.

The protein belongs to the class-I aminoacyl-tRNA synthetase family. Glutamate--tRNA ligase type 1 subfamily. Monomer. Zn(2+) serves as cofactor.

Its subcellular location is the cytoplasm. The catalysed reaction is tRNA(Glu) + L-glutamate + ATP = L-glutamyl-tRNA(Glu) + AMP + diphosphate. Its function is as follows. Catalyzes the attachment of glutamate to tRNA(Glu) in a two-step reaction: glutamate is first activated by ATP to form Glu-AMP and then transferred to the acceptor end of tRNA(Glu). This Pseudomonas paraeruginosa (strain DSM 24068 / PA7) (Pseudomonas aeruginosa (strain PA7)) protein is Glutamate--tRNA ligase.